The following is a 272-amino-acid chain: MVKEISVGNIKIGGDRPLVLVAGPCVIENEAATLRCAERLMTICNGVSMPLIFKASYDKANRTSVNSFRGPGLKDGLKILKKVKESLGVPVLSDIHSIEQVEPAAEVLDVIQIPAFLCRQTDLVVAAAMSGRVINIKKGQFLAPWDMENVVGKAVSTGNDNVILTERGVSFGYNNLVSDMRSFPILRQTGYPVIFDATHSVQLPGGLGGSSGGQREFVEYLGRAAVATGIDGIFMEVHEDPEKALCDGPNSVKLDDLPALLKKLKAIDAIVK.

The protein belongs to the KdsA family.

The protein localises to the cytoplasm. It carries out the reaction D-arabinose 5-phosphate + phosphoenolpyruvate + H2O = 3-deoxy-alpha-D-manno-2-octulosonate-8-phosphate + phosphate. Its pathway is carbohydrate biosynthesis; 3-deoxy-D-manno-octulosonate biosynthesis; 3-deoxy-D-manno-octulosonate from D-ribulose 5-phosphate: step 2/3. It functions in the pathway bacterial outer membrane biogenesis; lipopolysaccharide biosynthesis. The polypeptide is 2-dehydro-3-deoxyphosphooctonate aldolase (Geotalea daltonii (strain DSM 22248 / JCM 15807 / FRC-32) (Geobacter daltonii)).